A 78-amino-acid chain; its full sequence is Putative membrane protein insertion efficiency factor (78 aa).

The protein belongs to the UPF0161 family.

Its subcellular location is the cell membrane. In terms of biological role, could be involved in insertion of integral membrane proteins into the membrane. In Bacillus thuringiensis subsp. konkukian (strain 97-27), this protein is Putative membrane protein insertion efficiency factor.